Consider the following 229-residue polypeptide: RNA pyrophosphohydrolase (229 aa).

The 144-residue stretch at Gly6–Thr149 folds into the Nudix hydrolase domain. The Nudix box signature appears at Gly38–Gly59. The segment at Ser168–Ala229 is disordered.

The protein belongs to the Nudix hydrolase family. RppH subfamily. The cofactor is a divalent metal cation.

Accelerates the degradation of transcripts by removing pyrophosphate from the 5'-end of triphosphorylated RNA, leading to a more labile monophosphorylated state that can stimulate subsequent ribonuclease cleavage. This is RNA pyrophosphohydrolase from Delftia acidovorans (strain DSM 14801 / SPH-1).